We begin with the raw amino-acid sequence, 660 residues long: uncharacterized protein (660 aa).

The tract at residues 1–660 is disordered; the sequence is MGTPCQSARG…RNPGCPRTWR (660 aa). Gly residues predominate over residues 67 to 80; it reads RPGGGNRVGAGRGR. The span at 104–116 shows a compositional bias: polar residues; that stretch reads SNPTGGCSDPQRS. 4 tandem repeats follow at residues 149 to 273, 274 to 398, 399 to 523, and 524 to 648. The interval 149 to 648 is 4 X 125 AA tandem repeats; sequence SARNPGCPRT…THRRPPGCPR (500 aa). Low complexity-rich tracts occupy residues 177-196, 302-321, 427-446, and 552-571; these read RPSGPTGGRPAAPGAPGTPA.

This is an uncharacterized protein from Homo sapiens (Human).